Consider the following 190-residue polypeptide: Lipid A acyltransferase PagP (190 aa).

An N-terminal signal peptide occupies residues 1-18 (MKRLISCLTIICALNASA). Catalysis depends on residues histidine 60, aspartate 103, and serine 104.

It belongs to the lipid A palmitoyltransferase family. As to quaternary structure, homodimer.

It is found in the cell outer membrane. The catalysed reaction is a lipid A + a 1,2-diacyl-sn-glycero-3-phosphocholine = a hepta-acyl lipid A + a 2-acyl-sn-glycero-3-phosphocholine. It catalyses the reaction a lipid IVA + a 1,2-diacyl-sn-glycero-3-phosphocholine = a lipid IVB + a 2-acyl-sn-glycero-3-phosphocholine. The enzyme catalyses a lipid IIA + a 1,2-diacyl-sn-glycero-3-phosphocholine = a lipid IIB + a 2-acyl-sn-glycero-3-phosphocholine. Functionally, transfers a fatty acid residue from the sn-1 position of a phospholipid to the N-linked hydroxyfatty acid chain on the proximal unit of lipid A or its precursors. The chain is Lipid A acyltransferase PagP from Legionella pneumophila serogroup 1 (strain 2300/99 Alcoy).